Here is a 188-residue protein sequence, read N- to C-terminus: Elongation factor P-like protein (188 aa).

Belongs to the elongation factor P family.

The polypeptide is Elongation factor P-like protein (Saccharophagus degradans (strain 2-40 / ATCC 43961 / DSM 17024)).